Reading from the N-terminus, the 472-residue chain is MSPEEWTYLVVLLISIPIGFLFKKAGPGLKRWGAAAVGLGLTLFTCGPHTLHSLVTILGTWALIQAQPCSCHALALAWTFSYLLFFRALSLLGLPTPTPFTNAVQLLLTLKLVSLASEVQDLHVAQRKEMASGFSKGPPLGLLPDVPSLMETLSYSYCYVGIMTGPFFRYRTYLDWLEQPFPGAVPSLRPLLRRAWPAPLFGLLFLLSSHLFPLEAVREDAFYARPLPARLFYMIPVFFAFRMRFYVAWIAAECGCIAAGFGAYPVAAKARAGGGPTLQCPPPSSPEMAASLEYDYETIRNIDCYNTDFCVTVREGMRYWNMTVQWWLAQYIYKSAPARSYVLRSAWTMLLSAYWHGLHPGYYLSFLTIPLCLAAERQLESALRWRLGPGGQKAWDWVHWFLKMRAYDYMSMGFVLLSLRDTLRYWASVYFCVHVLALAALGLGLALGRGGPGRRKSGAPAPSPASGKLREE.

At 1–5 (MSPEE) the chain is on the cytoplasmic side. The chain crosses the membrane as a helical span at residues 6-22 (WTYLVVLLISIPIGFLF). The Lumenal segment spans residues 23–33 (KKAGPGLKRWG). Residues 34 to 57 (AAAVGLGLTLFTCGPHTLHSLVTI) traverse the membrane as a helical segment. The Cytoplasmic segment spans residues 58–73 (LGTWALIQAQPCSCHA). The helical transmembrane segment at 74-93 (LALAWTFSYLLFFRALSLLG) threads the bilayer. Topologically, residues 94–194 (LPTPTPFTNA…VPSLRPLLRR (101 aa)) are lumenal. Residues 195-212 (AWPAPLFGLLFLLSSHLF) traverse the membrane as a helical segment. At 213-231 (PLEAVREDAFYARPLPARL) the chain is on the cytoplasmic side. Residues 232–261 (FYMIPVFFAFRMRFYVAWIAAECGCIAAGF) form a helical membrane-spanning segment. Over 262-426 (GAYPVAAKAR…LSLRDTLRYW (165 aa)) the chain is Lumenal. Asn-321 carries an N-linked (GlcNAc...) asparagine glycan. The chain crosses the membrane as a helical span at residues 427–447 (ASVYFCVHVLALAALGLGLAL). Residues 448–472 (GRGGPGRRKSGAPAPSPASGKLREE) lie on the Cytoplasmic side of the membrane. The segment at 450-472 (GGPGRRKSGAPAPSPASGKLREE) is disordered.

This sequence belongs to the membrane-bound acyltransferase family. In terms of assembly, interacts with SPTSSA; the interaction facilitates MBOAT7 location to mitochondria-associated membranes (MAMs).

Its subcellular location is the endoplasmic reticulum membrane. It catalyses the reaction a 1-acyl-sn-glycero-3-phospho-(1D-myo-inositol) + an acyl-CoA = a 1,2-diacyl-sn-glycero-3-phospho-(1D-myo-inositol) + CoA. It carries out the reaction a 1-acyl-sn-glycero-3-phospho-(1D-myo-inositol) + (5Z,8Z,11Z,14Z)-eicosatetraenoyl-CoA = a 1-acyl-2-(5Z,8Z,11Z,14Z-eicosatetraenoyl)-sn-glycero-3-phospho-(1D-myo-inositol) + CoA. The enzyme catalyses (5Z,8Z,11Z,14Z)-eicosatetraenoyl-CoA + 1-hexadecanoyl-sn-glycero-3-phosphocholine = 1-hexadecanoyl-2-(5Z,8Z,11Z,14Z-eicosatetraenoyl)-sn-glycero-3-phosphocholine + CoA. The catalysed reaction is 1-octadecanoyl-sn-glycero-3-phospho-(1D-myo-inositol) + (5Z,8Z,11Z,14Z)-eicosatetraenoyl-CoA = 1-octadecanoyl-2-(5Z,8Z,11Z,14Z-eicosatetraenoyl)-sn-glycero-3-phospho-(1D-myo-inositol) + CoA. It participates in lipid metabolism; phospholipid metabolism. Functionally, acyltransferase which catalyzes the transfer of an acyl group from an acyl-CoA to a lysophosphatidylinositol (1-acylglycerophosphatidylinositol or LPI) leading to the production of a phosphatidylinositol (1,2-diacyl-sn-glycero-3-phosphoinositol or PI) and participates in the reacylation step of the phospholipid remodeling pathway also known as the Lands cycle. Prefers arachidonoyl-CoA as the acyl donor, thus contributing to the regulation of free levels arachidonic acid in cell. In liver, participates in the regulation of triglyceride metabolism through the phosphatidylinositol acyl-chain remodeling regulation. This chain is Membrane-bound acylglycerophosphatidylinositol O-acyltransferase MBOAT7 (MBOAT7), found in Bos taurus (Bovine).